Here is a 335-residue protein sequence, read N- to C-terminus: Putative D-threonate 4-phosphate dehydrogenase (335 aa).

Residues His140 and Thr141 each contribute to the substrate site. Positions 170, 214, and 269 each coordinate a divalent metal cation. Substrate contacts are provided by Lys277 and Arg295.

The protein belongs to the PdxA family. PdxA2 subfamily. Homodimer. A divalent metal cation is required as a cofactor.

It catalyses the reaction 4-O-phospho-D-threonate + NAD(+) = dihydroxyacetone phosphate + CO2 + NADH. In terms of biological role, catalyzes the NAD-dependent oxidation and subsequent decarboxylation of D-threonate 4-phosphate to produce dihydroxyacetone phosphate (DHAP). In Symbiobacterium thermophilum (strain DSM 24528 / JCM 14929 / IAM 14863 / T), this protein is Putative D-threonate 4-phosphate dehydrogenase.